A 359-amino-acid polypeptide reads, in one-letter code: Protein-glutamate methylesterase/protein-glutamine glutaminase 1 (359 aa).

A Response regulatory domain is found at 4–121; it reads SVLIVDDSAV…RAFLLEAAKE (118 aa). Asp55 carries the 4-aspartylphosphate modification. The CheB-type methylesterase domain occupies 169–354; sequence YRTTEKIIAI…MSLERIAHML (186 aa). Active-site residues include Ser181, His207, and Asp303.

This sequence belongs to the CheB family. Post-translationally, phosphorylated by CheA. Phosphorylation of the N-terminal regulatory domain activates the methylesterase activity.

It is found in the cytoplasm. It carries out the reaction [protein]-L-glutamate 5-O-methyl ester + H2O = L-glutamyl-[protein] + methanol + H(+). The enzyme catalyses L-glutaminyl-[protein] + H2O = L-glutamyl-[protein] + NH4(+). Involved in chemotaxis. Part of a chemotaxis signal transduction system that modulates chemotaxis in response to various stimuli. Catalyzes the demethylation of specific methylglutamate residues introduced into the chemoreceptors (methyl-accepting chemotaxis proteins or MCP) by CheR. Also mediates the irreversible deamidation of specific glutamine residues to glutamic acid. The polypeptide is Protein-glutamate methylesterase/protein-glutamine glutaminase 1 (Chromobacterium violaceum (strain ATCC 12472 / DSM 30191 / JCM 1249 / CCUG 213 / NBRC 12614 / NCIMB 9131 / NCTC 9757 / MK)).